Reading from the N-terminus, the 376-residue chain is Guanine nucleotide-binding protein G(s) subunit alpha (376 aa).

The N-palmitoyl glycine moiety is linked to residue glycine 2. Cysteine 3 carries the S-palmitoyl cysteine lipid modification. Residues 36 to 376 (GTHRLLLLGA…RMHLRQYELL (341 aa)) form the G-alpha domain. Residues 39–52 (RLLLLGAGESGKST) are G1 motif. Residues 44-51 (GAGESGKS), 180-186 (LRCRVLT), 205-209 (DVGGQ), 274-277 (NKQD), and alanine 348 each bind GTP. Mg(2+)-binding residues include serine 51 and threonine 186. A G2 motif region spans residues 178 to 186 (DILRCRVLT). The segment at 201–210 (FHMFDVGGQR) is G3 motif. Residues 270–277 (ILFLNKQD) are G4 motif. The segment at 346 to 351 (TCAVDT) is G5 motif.

It belongs to the G-alpha family. G(s) subfamily. In terms of assembly, g proteins are composed of 3 units; alpha, beta and gamma. The alpha chain contains the guanine nucleotide binding site.

Guanine nucleotide-binding proteins (G proteins) are involved as modulators or transducers in various transmembrane signaling systems. The G(s) protein is involved in hormonal regulation of adenylate cyclase: it activates the cyclase in response to beta-adrenergic stimuli. This Lymnaea stagnalis (Great pond snail) protein is Guanine nucleotide-binding protein G(s) subunit alpha.